The following is an 820-amino-acid chain: G-type lectin S-receptor-like serine/threonine-protein kinase At1g11280 (820 aa).

A signal peptide spans 1 to 28; the sequence is MGIHLGEIGIVLFPWFLWLSLFLSCGYA. The region spanning 29–148 is the Bulb-type lectin domain; that stretch reads AITISSPLTL…VSENLLWQSF (120 aa). Topologically, residues 29-434 are extracellular; that stretch reads AITISSPLTL…SELAGSRRTK (406 aa). 5 N-linked (GlcNAc...) asparagine glycosylation sites follow: Asn-57, Asn-92, Asn-98, Asn-241, and Asn-272. Residues 283–319 enclose the EGF-like domain; sequence PANLCDLYGACGPFGLCVTSNPTKCKCMKGFVPKYKE. 2 cysteine pairs are disulfide-bonded: Cys-287-Cys-299 and Cys-293-Cys-307. 3 N-linked (GlcNAc...) asparagine glycosylation sites follow: Asn-325, Asn-341, and Asn-384. The PAN domain occupies 338–422; that stretch reads CQANLSTKTQ…VGGEFLSIRL (85 aa). 2 disulfides stabilise this stretch: Cys-377–Cys-398 and Cys-381–Cys-387. The chain crosses the membrane as a helical span at residues 435-455; the sequence is IIVGSISLSIFVILAFGSYKY. Residues 456 to 820 lie on the Cytoplasmic side of the membrane; sequence WRYRAKQNVG…HVTQTEIYGR (365 aa). Positions 505–792 constitute a Protein kinase domain; it reads FNVSNKLGQG…DLPRPKQPLF (288 aa). ATP-binding positions include 511–519 and Lys-533; that span reads LGQGGFGPV. Phosphoserine occurs at positions 539 and 554. A caM-binding region spans residues 594 to 611; sequence TLKLQIDWPKRFNIIQGV. Catalysis depends on Asp-630, which acts as the Proton acceptor. 2 positions are modified to phosphoserine: Ser-634 and Ser-647. Thr-664 carries the post-translational modification Phosphothreonine. Ser-707, Ser-708, and Ser-808 each carry phosphoserine. Thr-815 is subject to Phosphothreonine.

This sequence belongs to the protein kinase superfamily. Ser/Thr protein kinase family.

The protein localises to the cell membrane. It carries out the reaction L-seryl-[protein] + ATP = O-phospho-L-seryl-[protein] + ADP + H(+). It catalyses the reaction L-threonyl-[protein] + ATP = O-phospho-L-threonyl-[protein] + ADP + H(+). This is G-type lectin S-receptor-like serine/threonine-protein kinase At1g11280 from Arabidopsis thaliana (Mouse-ear cress).